Here is a 159-residue protein sequence, read N- to C-terminus: Large ribosomal subunit protein uL15 (159 aa).

The segment at 1 to 46 is disordered; sequence MKLNELSPSVPKKNRKRIGRGNSSGWGKTAGKGSNGQNSRAGGGVK. Residues 22–34 show a composition bias toward gly residues; the sequence is NSSGWGKTAGKGS.

Belongs to the universal ribosomal protein uL15 family. In terms of assembly, part of the 50S ribosomal subunit.

Functionally, binds to the 23S rRNA. The polypeptide is Large ribosomal subunit protein uL15 (Fusobacterium nucleatum subsp. nucleatum (strain ATCC 25586 / DSM 15643 / BCRC 10681 / CIP 101130 / JCM 8532 / KCTC 2640 / LMG 13131 / VPI 4355)).